Here is a 246-residue protein sequence, read N- to C-terminus: Ribosomal RNA small subunit methyltransferase G (246 aa).

Residues G81, F86, 137–138 (AE), and R156 contribute to the S-adenosyl-L-methionine site. The tract at residues 221–246 (LVLIRKERPTPKAYPRRAGVPAKSPL) is disordered.

The protein belongs to the methyltransferase superfamily. RNA methyltransferase RsmG family.

It localises to the cytoplasm. Functionally, specifically methylates the N7 position of a guanine in 16S rRNA. This is Ribosomal RNA small subunit methyltransferase G from Symbiobacterium thermophilum (strain DSM 24528 / JCM 14929 / IAM 14863 / T).